The primary structure comprises 447 residues: MNHSLYLVAGLGKTGLSIARYLKRNNKSFVVFDTRKEAPGLAEFQNEFPDVPIYLQQTPDEVISQVTDVITSPGLALDTPVLESARQAGALIYGDIECLAREISAPVIAITGTNGKSTVTTLVGEMAKAAGFRVAVAGNIGTPVLDMLDDEHHYDLWVLELSSFQLDLTYSLSPVVATILNVTPDHLDRHHTMEAYTQAKQRIYRGAKAVLFNREDVYTVPHQSCQADIKCISFGKDAPSMGNWGLIEQENTIYLAKGMERLLPVESILIKGVHNWMNALAACALAEAAGISMQHILNVLKTFPGLPHRCQWVREVDGVGWINDSKGTNIGATISAINGIGGSMQGKIVLIAGGQGKGADFQELAQPVSEFVRSIVLIGEDADKIESALAKVVPVVRASSLEGAVTIAKTCAKPGDVVLLSPACASLDMFRDFNHRGDVFTSSVRGL.

Residue 112–118 (GTNGKST) coordinates ATP.

It belongs to the MurCDEF family.

Its subcellular location is the cytoplasm. The catalysed reaction is UDP-N-acetyl-alpha-D-muramoyl-L-alanine + D-glutamate + ATP = UDP-N-acetyl-alpha-D-muramoyl-L-alanyl-D-glutamate + ADP + phosphate + H(+). The protein operates within cell wall biogenesis; peptidoglycan biosynthesis. Cell wall formation. Catalyzes the addition of glutamate to the nucleotide precursor UDP-N-acetylmuramoyl-L-alanine (UMA). The protein is UDP-N-acetylmuramoylalanine--D-glutamate ligase of Legionella pneumophila (strain Lens).